The primary structure comprises 244 residues: U11/U12 small nuclear ribonucleoprotein 35 kDa protein (244 aa).

One can recognise an RRM domain in the interval leucine 51–glutamate 129. Basic and acidic residues predominate over residues glycine 146–phenylalanine 162. The tract at residues glycine 146–lysine 244 is disordered. Lysine 172 participates in a covalent cross-link: Glycyl lysine isopeptide (Lys-Gly) (interchain with G-Cter in SUMO2). Composition is skewed to basic and acidic residues over residues asparagine 173–glutamate 185 and arginine 192–lysine 244.

Component of the U11/U12 snRNPs that are part of the U12-type spliceosome.

The protein localises to the nucleus. This chain is U11/U12 small nuclear ribonucleoprotein 35 kDa protein (Snrnp35), found in Mus musculus (Mouse).